The sequence spans 239 residues: MNIDIVISADHIDEKRLINKTVIIIDILRATSVITTAINNGCKKVIPVLTVEEAKDIAKNSKEDIILGGERNALKIDGFNFSNSPLEYTKKYVEGKTVVLSTTNGTRAINNSFNAKTILISALINSKATAKAIDKLNEDLIIINSGTNGQFSIDDFICSGYLIDCLYNIRKDLELSDIAKTAHYIYTNNKDIESFVKKATHYSRLKSLNLEKDLEYCFQKDIIDVVPQYKDGYIIKSNI.

It belongs to the ComB family. Mg(2+) serves as cofactor.

It carries out the reaction (2R)-O-phospho-3-sulfolactate + H2O = (2R)-3-sulfolactate + phosphate. The polypeptide is Probable 2-phosphosulfolactate phosphatase (Clostridium botulinum (strain Kyoto / Type A2)).